The sequence spans 809 residues: Zygotic DNA replication licensing factor mcm3 (809 aa).

An MCM domain is found at 297–504 (IFEQLSRSLA…QDREISDHVL (208 aa)). Position 347–354 (347–354 (GDPSVAKS)) interacts with ATP. The Arginine finger signature appears at 479-482 (SRFD). The interval 664–741 (KKRRRRDEDS…TDSSAKPGLS (78 aa)) is disordered. Residues 696–705 (AQEGESHDPY) are compositionally biased toward basic and acidic residues.

Belongs to the MCM family. As to quaternary structure, component of the mcm2-7 complex (RLF-M). The complex forms a toroidal hexameric ring with the proposed subunit order mcm2-mcm6-mcm4-mcm7-mcm3-mcm5. Component of the CMG helicase complex, composed of the mcm2-7 complex, the GINS complex and cdc45.

It localises to the nucleus. It is found in the chromosome. The enzyme catalyses ATP + H2O = ADP + phosphate + H(+). In terms of biological role, acts as a component of the MCM2-7 complex (MCM complex) which is the putative replicative helicase essential for 'once per cell cycle' DNA replication initiation and elongation in eukaryotic cells. The active ATPase sites in the MCM2-7 ring are formed through the interaction surfaces of two neighboring subunits such that a critical structure of a conserved arginine finger motif is provided in trans relative to the ATP-binding site of the Walker A box of the adjacent subunit. The six ATPase active sites, however, are likely to contribute differentially to the complex helicase activity. The existence of maternal and zygotic forms of mcm3 and mcm6 suggests that specific forms of mcm2-7 complexes may be used during different stages of development. The protein is Zygotic DNA replication licensing factor mcm3 (zmcm3) of Xenopus tropicalis (Western clawed frog).